A 1458-amino-acid chain; its full sequence is ABC multidrug transporter B (1458 aa).

Helical transmembrane passes span 30-50 (FSLL…VLII), 70-90 (LLWA…VLAV), 102-122 (ASIA…LLSC), 128-148 (STTP…FDIA), and 165-185 (IAIL…LEAV). N-linked (GlcNAc...) asparagine glycosylation is present at Asn-208. A helical membrane pass occupies residues 273–295 (WPLLSAVPPRACLAALNFCQPLL). One can recognise an ABC transmembrane type-1 1 domain in the interval 283–561 (ACLAALNFCQ…LVMALMTFVG (279 aa)). Asn-309 is a glycosylation site (N-linked (GlcNAc...) asparagine). A run of 5 helical transmembrane segments spans residues 314–334 (IGYG…VTMG), 387–407 (WQTI…IYLL), 411–431 (LGVA…GCLI), 501–521 (LGWT…YGIM), and 541–561 (LFAL…TFVG). Positions 626 to 853 (LTVKNATFAW…AGGYVSSFGL (228 aa)) constitute an ABC transporter 1 domain. Residue Asn-630 is glycosylated (N-linked (GlcNAc...) asparagine). 660–667 (GPSGCGKS) is an ATP binding site. N-linked (GlcNAc...) asparagine glycans are attached at residues Asn-702, Asn-804, and Asn-879. An ABC transmembrane type-1 2 domain is found at 933–1182 (PNGRTGYYLG…LVTFWTNLET (250 aa)). 6 helical membrane passes run 940-960 (YLGI…IGCW), 978-998 (LLAT…SGSI), 1016-1036 (AAIN…LMGI), 1040-1060 (YAAI…KVYL), 1125-1145 (LTLT…VLVV), and 1156-1176 (VGVA…LVTF). The 231-residue stretch at 1219 to 1449 (IEFKSVSAEY…EGSYFSRLYA (231 aa)) folds into the ABC transporter 2 domain. An ATP-binding site is contributed by 1252–1259 (GRTGSGKT). Asn-1316 is a glycosylation site (N-linked (GlcNAc...) asparagine).

The protein belongs to the ABC transporter superfamily. ABCC family. Conjugate transporter (TC 3.A.1.208) subfamily.

The protein localises to the cell membrane. In terms of biological role, pleiotropic ABC efflux transporter that may be involved in A.fumigatus adaptation to azoles such as vorizonazole. In Aspergillus fumigatus (strain ATCC MYA-4609 / CBS 101355 / FGSC A1100 / Af293) (Neosartorya fumigata), this protein is ABC multidrug transporter B.